We begin with the raw amino-acid sequence, 476 residues long: Bifunctional protein HldE (476 aa).

The ribokinase stretch occupies residues 1–318 (MKVTLPEFER…ENAVRGRADT (318 aa)). 195-198 (NLSE) contributes to the ATP binding site. Aspartate 264 is a catalytic residue. The segment at 344–476 (MTNGVFDILH…IIKKIQKDSQ (133 aa)) is cytidylyltransferase.

It in the N-terminal section; belongs to the carbohydrate kinase PfkB family. The protein in the C-terminal section; belongs to the cytidylyltransferase family. Homodimer.

It catalyses the reaction D-glycero-beta-D-manno-heptose 7-phosphate + ATP = D-glycero-beta-D-manno-heptose 1,7-bisphosphate + ADP + H(+). The enzyme catalyses D-glycero-beta-D-manno-heptose 1-phosphate + ATP + H(+) = ADP-D-glycero-beta-D-manno-heptose + diphosphate. The protein operates within nucleotide-sugar biosynthesis; ADP-L-glycero-beta-D-manno-heptose biosynthesis; ADP-L-glycero-beta-D-manno-heptose from D-glycero-beta-D-manno-heptose 7-phosphate: step 1/4. Its pathway is nucleotide-sugar biosynthesis; ADP-L-glycero-beta-D-manno-heptose biosynthesis; ADP-L-glycero-beta-D-manno-heptose from D-glycero-beta-D-manno-heptose 7-phosphate: step 3/4. Catalyzes the phosphorylation of D-glycero-D-manno-heptose 7-phosphate at the C-1 position to selectively form D-glycero-beta-D-manno-heptose-1,7-bisphosphate. In terms of biological role, catalyzes the ADP transfer from ATP to D-glycero-beta-D-manno-heptose 1-phosphate, yielding ADP-D-glycero-beta-D-manno-heptose. The protein is Bifunctional protein HldE of Enterobacter sp. (strain 638).